The following is a 359-amino-acid chain: 3-dehydroquinate synthase (359 aa).

This sequence belongs to the archaeal-type DHQ synthase family.

The enzyme catalyses 2-amino-2,3,7-trideoxy-D-lyxo-hept-6-ulosonate + NAD(+) + H2O = 3-dehydroquinate + NH4(+) + NADH + H(+). Its function is as follows. Catalyzes the oxidative deamination and cyclization of 2-amino-3,7-dideoxy-D-threo-hept-6-ulosonic acid (ADH) to yield 3-dehydroquinate (DHQ), which is fed into the canonical shikimic pathway of aromatic amino acid biosynthesis. This chain is 3-dehydroquinate synthase, found in Methanosphaera stadtmanae (strain ATCC 43021 / DSM 3091 / JCM 11832 / MCB-3).